Consider the following 1270-residue polypeptide: DNA-directed RNA polymerase subunit beta (1270 aa).

The protein belongs to the RNA polymerase beta chain family. As to quaternary structure, the RNAP catalytic core consists of 2 alpha, 1 beta, 1 beta' and 1 omega subunit. When a sigma factor is associated with the core the holoenzyme is formed, which can initiate transcription.

The catalysed reaction is RNA(n) + a ribonucleoside 5'-triphosphate = RNA(n+1) + diphosphate. Functionally, DNA-dependent RNA polymerase catalyzes the transcription of DNA into RNA using the four ribonucleoside triphosphates as substrates. The protein is DNA-directed RNA polymerase subunit beta of Porphyromonas cangingivalis.